A 435-amino-acid chain; its full sequence is 5-hydroxybenzimidazole synthase (435 aa).

Substrate-binding positions include Met95, Tyr124, His163, 186-188 (SKG), 227-230 (NGLR), and Glu266. His270 is a binding site for Zn(2+). Tyr293 contacts substrate. Residue His334 coordinates Zn(2+). Residues Cys410, Cys413, and Cys417 each coordinate [4Fe-4S] cluster.

This sequence belongs to the ThiC family. 5-hydroxybenzimidazole synthase subfamily. Homodimer. The cofactor is [4Fe-4S] cluster.

It carries out the reaction 5-amino-1-(5-phospho-beta-D-ribosyl)imidazole + AH2 + S-adenosyl-L-methionine = 5-hydroxybenzimidazole + 5'-deoxyadenosine + formate + L-methionine + A + NH4(+) + phosphate + 2 H(+). Functionally, catalyzes the conversion of aminoimidazole ribotide (AIR) to 5-hydroxybenzimidazole (5-HBI) in a radical S-adenosyl-L-methionine (SAM)-dependent reaction. Is thus involved in the anaerobic biosynthesis of the benzimidazole lower axial ligand of the cobamide produced by G.sulfurreducens. This Geobacter sulfurreducens (strain ATCC 51573 / DSM 12127 / PCA) protein is 5-hydroxybenzimidazole synthase.